A 105-amino-acid polypeptide reads, in one-letter code: Large ribosomal subunit protein uL23 (105 aa).

The protein belongs to the universal ribosomal protein uL23 family. As to quaternary structure, part of the 50S ribosomal subunit. Contacts protein L29, and trigger factor when it is bound to the ribosome.

In terms of biological role, one of the early assembly proteins it binds 23S rRNA. One of the proteins that surrounds the polypeptide exit tunnel on the outside of the ribosome. Forms the main docking site for trigger factor binding to the ribosome. The sequence is that of Large ribosomal subunit protein uL23 from Ureaplasma urealyticum serovar 10 (strain ATCC 33699 / Western).